The sequence spans 740 residues: Elongation factor 2 (740 aa).

Residues 18-263 form the tr-type G domain; it reads EQVRNIGIIA…MVVRWVPNPR (246 aa). GTP is bound by residues 27–34, 93–97, and 147–150; these read AHVDHGKT, DTPGH, and NKVD. Histidine 606 is subject to Diphthamide.

The protein belongs to the TRAFAC class translation factor GTPase superfamily. Classic translation factor GTPase family. EF-G/EF-2 subfamily.

The protein localises to the cytoplasm. Catalyzes the GTP-dependent ribosomal translocation step during translation elongation. During this step, the ribosome changes from the pre-translocational (PRE) to the post-translocational (POST) state as the newly formed A-site-bound peptidyl-tRNA and P-site-bound deacylated tRNA move to the P and E sites, respectively. Catalyzes the coordinated movement of the two tRNA molecules, the mRNA and conformational changes in the ribosome. The protein is Elongation factor 2 of Ignicoccus hospitalis (strain KIN4/I / DSM 18386 / JCM 14125).